Here is a 376-residue protein sequence, read N- to C-terminus: DNA replication and repair protein RecF (376 aa).

Residue 30–37 (GHNGVGKT) coordinates ATP.

It belongs to the RecF family.

It is found in the cytoplasm. Functionally, the RecF protein is involved in DNA metabolism; it is required for DNA replication and normal SOS inducibility. RecF binds preferentially to single-stranded, linear DNA. It also seems to bind ATP. The polypeptide is DNA replication and repair protein RecF (Salinispora arenicola (strain CNS-205)).